The primary structure comprises 250 residues: Phosphoribosylaminoimidazole-succinocarboxamide synthase (250 aa).

The protein belongs to the SAICAR synthetase family.

It catalyses the reaction 5-amino-1-(5-phospho-D-ribosyl)imidazole-4-carboxylate + L-aspartate + ATP = (2S)-2-[5-amino-1-(5-phospho-beta-D-ribosyl)imidazole-4-carboxamido]succinate + ADP + phosphate + 2 H(+). It functions in the pathway purine metabolism; IMP biosynthesis via de novo pathway; 5-amino-1-(5-phospho-D-ribosyl)imidazole-4-carboxamide from 5-amino-1-(5-phospho-D-ribosyl)imidazole-4-carboxylate: step 1/2. This is Phosphoribosylaminoimidazole-succinocarboxamide synthase from Bifidobacterium longum (strain DJO10A).